Reading from the N-terminus, the 275-residue chain is Glutamate racemase (275 aa).

Substrate-binding positions include 12 to 13 (DS) and 44 to 45 (YG). Cys75 functions as the Proton donor/acceptor in the catalytic mechanism. A substrate-binding site is contributed by 76-77 (NT). Cys185 serves as the catalytic Proton donor/acceptor. Residue 186–187 (TH) participates in substrate binding.

Belongs to the aspartate/glutamate racemases family.

It catalyses the reaction L-glutamate = D-glutamate. It functions in the pathway cell wall biogenesis; peptidoglycan biosynthesis. In terms of biological role, provides the (R)-glutamate required for cell wall biosynthesis. The protein is Glutamate racemase of Mycolicibacterium paratuberculosis (strain ATCC BAA-968 / K-10) (Mycobacterium paratuberculosis).